Consider the following 115-residue polypeptide: Beta-2-microglobulin (115 aa).

Residues 1-18 form the signal peptide; it reads MGLLICSLLLGLLCCSMA. Residues 23 to 114 form the Ig-like C1-type domain; it reads PKVEVYTREP…KSKDHFLMIG (92 aa).

Belongs to the beta-2-microglobulin family. As to quaternary structure, heterodimer of an alpha chain and a beta chain. Beta-2-microglobulin is the beta-chain of major histocompatibility complex class I molecules.

The protein resides in the secreted. Functionally, component of the class I major histocompatibility complex (MHC). Involved in the presentation of peptide antigens to the immune system. This chain is Beta-2-microglobulin (b2m), found in Paralichthys olivaceus (Bastard halibut).